We begin with the raw amino-acid sequence, 184 residues long: Glutathione-regulated potassium-efflux system ancillary protein KefG (184 aa).

Belongs to the NAD(P)H dehydrogenase (quinone) family. KefG subfamily. Interacts with KefB.

It is found in the cell inner membrane. It carries out the reaction a quinone + NADH + H(+) = a quinol + NAD(+). The catalysed reaction is a quinone + NADPH + H(+) = a quinol + NADP(+). In terms of biological role, regulatory subunit of a potassium efflux system that confers protection against electrophiles. Required for full activity of KefB. This Cronobacter sakazakii (strain ATCC BAA-894) (Enterobacter sakazakii) protein is Glutathione-regulated potassium-efflux system ancillary protein KefG.